Here is a 258-residue protein sequence, read N- to C-terminus: MNFPPIHPSTPKMTPPDLDPQKIPQHIAVIMDGNGRWATSRGLPRIAGHRQGARTLKELLRCCKDWGIKALTAYAFSTENWQRPIEEVDFLMLLFERLLRRELSQMHREGVRISFIGDLTALPKSLQTEMERSMTETLNNQAIHFTVAVNYGSRNEITRACRQVAELVQQGKLSADAVNEGIVEQHLYTTDTQPPDLLIRTSGEMRLSNFLLWQMAYTEMYFTDILWPDFDREAFHQALLSYQKRDRRFGQVKALISA.

Pro residues predominate over residues 1-18; sequence MNFPPIHPSTPKMTPPDL. The segment at 1-21 is disordered; that stretch reads MNFPPIHPSTPKMTPPDLDPQ. The active site involves Asp-32. Residue Asp-32 participates in Mg(2+) binding. Residues 33-36, Trp-37, Arg-45, His-49, and 77-79 contribute to the substrate site; these read GNGR and STE. The active-site Proton acceptor is the Asn-80. Residues Trp-81, Arg-83, Arg-200, and 206–208 each bind substrate; that span reads RLS. Glu-219 lines the Mg(2+) pocket.

It belongs to the UPP synthase family. As to quaternary structure, homodimer. Requires Mg(2+) as cofactor.

Functionally, catalyzes the condensation of isopentenyl diphosphate (IPP) with allylic pyrophosphates generating different type of terpenoids. The protein is Isoprenyl transferase 2 of Nostoc sp. (strain PCC 7120 / SAG 25.82 / UTEX 2576).